The following is a 128-amino-acid chain: Large ribosomal subunit protein bL17 (128 aa).

This sequence belongs to the bacterial ribosomal protein bL17 family. Part of the 50S ribosomal subunit. Contacts protein L32.

The polypeptide is Large ribosomal subunit protein bL17 (Pseudomonas fluorescens (strain ATCC BAA-477 / NRRL B-23932 / Pf-5)).